We begin with the raw amino-acid sequence, 88 residues long: Conotoxin tx9a (88 aa).

Positions 1–27 are cleaved as a signal peptide; sequence MHLSLARSAVLMLLLLFALGNFVVVQS. Positions 28–58 are excised as a propeptide; the sequence is GQITRDVDNGQLTDNRRNLQSKWKPVSLYMS. Intrachain disulfides connect cysteine 62–cysteine 76, cysteine 66–cysteine 78, and cysteine 72–cysteine 83. 4-carboxyglutamate; partial occurs at positions 68 and 73. The residue at position 87 (asparagine 87) is an Asparagine amide.

Post-translationally, exists in 4 different forms, depending on gamma-carboxyglutamations. Tx9a-EE does not contain gamma-carboxyglutamate, tx9a-E/gamma has one gamma-carboxyglutamate at position 73, tx9a-gamma/E has one gamma-carboxyglutamate at position 68, and tx9a-agmma/gamma has two gamma-carboxyglutamates at positions 68 and 73. In terms of tissue distribution, expressed by the venom duct. All different gamma-carboxyalted forms are mostly present in part 2, part 3 and part 4 of the venom duct. They are also found in part 1 (proximal part near the venom bulb) and part 5, but in lower quantity.

It localises to the secreted. Its function is as follows. Neurotoxin. In vivo, intracranial injection into mice of 10 pmol/g of the peptide induces running in circles and hyperactivity. At higher doses (50 pmol/g), the mice exhibit running and climbing symptoms for close to one hour. Between 130 and 150 pmol/g, characteristic 'spasmodic' symptomatology is elicited. A hand clap would make mice jump high and start running rapidly. When exposed to a loud hand clap, or if the cage cover were dropped, the mice lose motor control and exhibit seizure-like symptoms from which they eventually recover. At the highest doses tested (over 250 pmol/g), after the characteristic spasmodic symptomatology, lethality occurs. Injection of a similar dose range intramuscularly into Siamese fighting fish elicited no unusual symptomatology. This Conus textile (Cloth-of-gold cone) protein is Conotoxin tx9a.